Consider the following 405-residue polypeptide: Coenzyme F420 hydrogenase subunit alpha (405 aa).

Positions 63, 66, 380, and 383 each coordinate Ni(2+).

It belongs to the [NiFe]/[NiFeSe] hydrogenase large subunit family. As to quaternary structure, heterocomplex of the form (alpha(1)beta(1)gamma(1))(8). Ni(2+) is required as a cofactor. It depends on iron-sulfur cluster as a cofactor. Requires FAD as cofactor.

The enzyme catalyses oxidized coenzyme F420-(gamma-L-Glu)(n) + H2 + H(+) = reduced coenzyme F420-(gamma-L-Glu)(n). Functionally, reduces the physiological low-potential two-electron acceptor coenzyme F420, and the artificial one-electron acceptor methylviologen. This chain is Coenzyme F420 hydrogenase subunit alpha (frhA), found in Methanothermobacter thermautotrophicus (strain ATCC 29096 / DSM 1053 / JCM 10044 / NBRC 100330 / Delta H) (Methanobacterium thermoautotrophicum).